The primary structure comprises 921 residues: Translation initiation factor IF-2 (921 aa).

The tract at residues 1-296 (MADNNTPGDK…PGPQKQRGRL (296 aa)) is disordered. A compositionally biased stretch (low complexity) spans 80–89 (RPSGPRPGSS). Residues 116–182 (ARVRDMEERR…AKKRFGEGEA (67 aa)) show a composition bias toward basic and acidic residues. The segment covering 183-257 (PRPATAAPQQ…LGRAPGVAAG (75 aa)) has biased composition (low complexity). A tr-type G domain is found at 417-586 (PRSPVVTVMG…MIALQADILD (170 aa)). Residues 426–433 (GHVDHGKT) form a G1 region. 426–433 (GHVDHGKT) lines the GTP pocket. Positions 451–455 (GITQH) are G2. The tract at residues 474–477 (DTPG) is G3. Residues 474-478 (DTPGH) and 528-531 (NKID) each bind GTP. Residues 528–531 (NKID) are G4. Positions 564-566 (SAK) are G5.

This sequence belongs to the TRAFAC class translation factor GTPase superfamily. Classic translation factor GTPase family. IF-2 subfamily.

It localises to the cytoplasm. Its function is as follows. One of the essential components for the initiation of protein synthesis. Protects formylmethionyl-tRNA from spontaneous hydrolysis and promotes its binding to the 30S ribosomal subunits. Also involved in the hydrolysis of GTP during the formation of the 70S ribosomal complex. This Bradyrhizobium sp. (strain BTAi1 / ATCC BAA-1182) protein is Translation initiation factor IF-2.